The sequence spans 1211 residues: Periplasmic acid trehalase ATC1 (1211 aa).

Residues 1–46 lie on the Cytoplasmic side of the membrane; sequence MKRIRSLWFNAEASYSNLNNSPSLRNKNSTGNNSRSKNYRSFSRFD. Residues 47 to 67 traverse the membrane as a helical segment; that stretch reads LINSILLLMMLFLLAIFVTAL. Residues 68-1211 are Periplasmic-facing; it reads YLTKSSRLTY…ATIKEIVLND (1144 aa). Residues 70 to 131 are required for cell surface targeting; sequence TKSSRLTYSH…NTAYYDDENM (62 aa). 10 N-linked (GlcNAc...) asparagine glycosylation sites follow: asparagine 98, asparagine 207, asparagine 238, asparagine 247, asparagine 255, asparagine 259, asparagine 325, asparagine 370, asparagine 376, and asparagine 488. Position 513–514 (513–514) interacts with substrate; the sequence is WD. Asparagine 539, asparagine 568, asparagine 628, and asparagine 638 each carry an N-linked (GlcNAc...) asparagine glycan. Glutamate 644 serves as the catalytic Proton donor. N-linked (GlcNAc...) asparagine glycosylation is found at asparagine 696 and asparagine 705. Residue 711–712 participates in substrate binding; sequence KQ. N-linked (GlcNAc...) asparagine glycans are attached at residues asparagine 879, asparagine 897, asparagine 910, asparagine 972, asparagine 990, asparagine 1031, asparagine 1049, asparagine 1064, asparagine 1147, and asparagine 1157.

This sequence belongs to the glycosyl hydrolase 65 family. In terms of processing, glycosylated.

The protein resides in the membrane. It localises to the vacuole lumen. The protein localises to the periplasm. The catalysed reaction is alpha,alpha-trehalose + H2O = alpha-D-glucose + beta-D-glucose. Periplasmic acid trehalase that catalyzes hydrolysis of the disaccharide trehalose and required for growth on trehalose as carbon source. Growth on trehalose is strictly respiratory. This chain is Periplasmic acid trehalase ATC1, found in Saccharomyces cerevisiae (strain CEN.PK113-7D) (Baker's yeast).